A 127-amino-acid chain; its full sequence is Small ribosomal subunit protein uS11c (127 aa).

Belongs to the universal ribosomal protein uS11 family. As to quaternary structure, part of the 30S ribosomal subunit.

Its subcellular location is the plastid. It localises to the chloroplast. This chain is Small ribosomal subunit protein uS11c, found in Heterosigma akashiwo (strain NIES-293 / 8280G21-1).